We begin with the raw amino-acid sequence, 243 residues long: Probable glycerol uptake facilitator protein (243 aa).

2 consecutive transmembrane segments (helical) span residues Ile-7–Ala-27 and Leu-44–Val-64. The NPA 1 signature appears at Asn-72–Ala-74. Transmembrane regions (helical) follow at residues Ile-88–Ile-108, Ile-143–His-163, and Thr-166–Ile-186. The NPA 2 motif lies at Asn-187–Ala-189. A helical membrane pass occupies residues Leu-221 to Ile-241.

This sequence belongs to the MIP/aquaporin (TC 1.A.8) family.

The protein resides in the cell membrane. The catalysed reaction is glycerol(in) = glycerol(out). Mediates glycerol diffusion across the cytoplasmic membrane via a pore-type mechanism. This chain is Probable glycerol uptake facilitator protein (glpF), found in Mycoplasmoides gallisepticum (strain R(low / passage 15 / clone 2)) (Mycoplasma gallisepticum).